The primary structure comprises 419 residues: Phosphoglycerate kinase (419 aa).

Residues 42-44 (DLN), R58, 81-84 (HLGR), R135, and R168 each bind substrate. ATP-binding positions include K219, E341, and 367–370 (GGDT).

Belongs to the phosphoglycerate kinase family. Monomer.

It localises to the cytoplasm. It catalyses the reaction (2R)-3-phosphoglycerate + ATP = (2R)-3-phospho-glyceroyl phosphate + ADP. Its pathway is carbohydrate degradation; glycolysis; pyruvate from D-glyceraldehyde 3-phosphate: step 2/5. In Ralstonia nicotianae (strain ATCC BAA-1114 / GMI1000) (Ralstonia solanacearum), this protein is Phosphoglycerate kinase.